The primary structure comprises 191 residues: Elongation factor P-like protein (191 aa).

It belongs to the elongation factor P family.

In Photobacterium profundum (strain SS9), this protein is Elongation factor P-like protein.